The chain runs to 178 residues: Large ribosomal subunit protein uL5 (178 aa).

This sequence belongs to the universal ribosomal protein uL5 family. In terms of assembly, part of the 50S ribosomal subunit; part of the 5S rRNA/L5/L18/L25 subcomplex. Contacts the 5S rRNA and the P site tRNA. Forms a bridge to the 30S subunit in the 70S ribosome.

This is one of the proteins that bind and probably mediate the attachment of the 5S RNA into the large ribosomal subunit, where it forms part of the central protuberance. In the 70S ribosome it contacts protein S13 of the 30S subunit (bridge B1b), connecting the 2 subunits; this bridge is implicated in subunit movement. Contacts the P site tRNA; the 5S rRNA and some of its associated proteins might help stabilize positioning of ribosome-bound tRNAs. The polypeptide is Large ribosomal subunit protein uL5 (Psychrobacter sp. (strain PRwf-1)).